A 209-amino-acid chain; its full sequence is Large ribosomal subunit protein bL9 (209 aa).

The disordered stretch occupies residues arginine 169–leucine 209. Residues glutamate 189 to leucine 209 show a composition bias toward acidic residues.

The protein belongs to the bacterial ribosomal protein bL9 family.

Its function is as follows. Binds to the 23S rRNA. The chain is Large ribosomal subunit protein bL9 from Zymomonas mobilis subsp. mobilis (strain ATCC 31821 / ZM4 / CP4).